The primary structure comprises 328 residues: D-cysteine desulfhydrase (328 aa).

Lysine 51 is modified (N6-(pyridoxal phosphate)lysine).

It belongs to the ACC deaminase/D-cysteine desulfhydrase family. Homodimer. Pyridoxal 5'-phosphate serves as cofactor.

The catalysed reaction is D-cysteine + H2O = hydrogen sulfide + pyruvate + NH4(+) + H(+). Catalyzes the alpha,beta-elimination reaction of D-cysteine and of several D-cysteine derivatives. It could be a defense mechanism against D-cysteine. The protein is D-cysteine desulfhydrase of Salmonella typhi.